The sequence spans 70 residues: Large ribosomal subunit protein eL38 (70 aa).

It belongs to the eukaryotic ribosomal protein eL38 family.

This Plutella xylostella (Diamondback moth) protein is Large ribosomal subunit protein eL38 (RpL38).